Reading from the N-terminus, the 245-residue chain is 1-(5-phosphoribosyl)-5-[(5-phosphoribosylamino)methylideneamino] imidazole-4-carboxamide isomerase (245 aa).

D7 functions as the Proton acceptor in the catalytic mechanism. The Proton donor role is filled by D129.

It belongs to the HisA/HisF family.

Its subcellular location is the cytoplasm. The enzyme catalyses 1-(5-phospho-beta-D-ribosyl)-5-[(5-phospho-beta-D-ribosylamino)methylideneamino]imidazole-4-carboxamide = 5-[(5-phospho-1-deoxy-D-ribulos-1-ylimino)methylamino]-1-(5-phospho-beta-D-ribosyl)imidazole-4-carboxamide. It participates in amino-acid biosynthesis; L-histidine biosynthesis; L-histidine from 5-phospho-alpha-D-ribose 1-diphosphate: step 4/9. The sequence is that of 1-(5-phosphoribosyl)-5-[(5-phosphoribosylamino)methylideneamino] imidazole-4-carboxamide isomerase from Escherichia coli (strain ATCC 8739 / DSM 1576 / NBRC 3972 / NCIMB 8545 / WDCM 00012 / Crooks).